The following is a 178-amino-acid chain: 3-hydroxyacyl-[acyl-carrier-protein] dehydratase FabZ (178 aa).

His54 is a catalytic residue.

The protein belongs to the thioester dehydratase family. FabZ subfamily.

The protein resides in the cytoplasm. The catalysed reaction is a (3R)-hydroxyacyl-[ACP] = a (2E)-enoyl-[ACP] + H2O. Involved in unsaturated fatty acids biosynthesis. Catalyzes the dehydration of short chain beta-hydroxyacyl-ACPs and long chain saturated and unsaturated beta-hydroxyacyl-ACPs. This Yersinia enterocolitica protein is 3-hydroxyacyl-[acyl-carrier-protein] dehydratase FabZ.